The following is a 100-amino-acid chain: Urease subunit gamma (100 aa).

The protein belongs to the urease gamma subunit family. Heterotrimer of UreA (gamma), UreB (beta) and UreC (alpha) subunits. Three heterotrimers associate to form the active enzyme.

The protein localises to the cytoplasm. It catalyses the reaction urea + 2 H2O + H(+) = hydrogencarbonate + 2 NH4(+). It functions in the pathway nitrogen metabolism; urea degradation; CO(2) and NH(3) from urea (urease route): step 1/1. The sequence is that of Urease subunit gamma from Pseudomonas aeruginosa (strain LESB58).